The sequence spans 380 residues: Cytochrome b (380 aa).

4 helical membrane-spanning segments follow: residues 33-53, 77-98, 113-133, and 178-198; these read FGSL…FLAM, WLIR…FLHV, WNMG…GYVL, and FFAF…VHLL. Positions 83 and 97 each coordinate heme b. The heme b site is built by His-182 and His-196. His-201 lines the a ubiquinone pocket. Helical transmembrane passes span 226-246, 288-308, 320-340, and 347-367; these read IKDL…VLFF, LGGV…PLLH, ITQT…WIGG, and FIMI…IFMP.

The protein belongs to the cytochrome b family. In terms of assembly, the cytochrome bc1 complex contains 11 subunits: 3 respiratory subunits (MT-CYB, CYC1 and UQCRFS1), 2 core proteins (UQCRC1 and UQCRC2) and 6 low-molecular weight proteins (UQCRH/QCR6, UQCRB/QCR7, UQCRQ/QCR8, UQCR10/QCR9, UQCR11/QCR10 and a cleavage product of UQCRFS1). This cytochrome bc1 complex then forms a dimer. The cofactor is heme b.

It is found in the mitochondrion inner membrane. Component of the ubiquinol-cytochrome c reductase complex (complex III or cytochrome b-c1 complex) that is part of the mitochondrial respiratory chain. The b-c1 complex mediates electron transfer from ubiquinol to cytochrome c. Contributes to the generation of a proton gradient across the mitochondrial membrane that is then used for ATP synthesis. This Synaptomys borealis (Northern bog lemming) protein is Cytochrome b (MT-CYB).